Here is a 60-residue protein sequence, read N- to C-terminus: Kunitz-type serine protease inhibitor conotoxin Cal9.1c (60 aa).

Residues 1 to 2 constitute a propeptide that is removed on maturation; the sequence is RT. The region spanning 7–57 is the BPTI/Kunitz inhibitor domain; it reads CELPFEEGPCFAAIRVYAYNAETGNCEQLTYGGCEGNGNRFATLEDCDNAC. 3 disulfide bridges follow: Cys7/Cys57, Cys16/Cys40, and Cys32/Cys53.

It belongs to the venom Kunitz-type family. Expressed by the venom duct.

The protein localises to the secreted. The protein is Kunitz-type serine protease inhibitor conotoxin Cal9.1c of Californiconus californicus (California cone).